The primary structure comprises 54 residues: Putative collagen-like domain-containing protein 065L (54 aa).

Residues Met-1–Phe-54 form a disordered region. The region spanning Pro-7–Ala-51 is the Collagen-like domain. Over residues Gly-26–Gly-35 the composition is skewed to gly residues. The segment covering Pro-42 to Phe-54 has biased composition (low complexity).

The polypeptide is Putative collagen-like domain-containing protein 065L (Dryophytes versicolor (chameleon treefrog)).